Here is a 468-residue protein sequence, read N- to C-terminus: ATP synthase subunit beta (468 aa).

148-155 contacts ATP; it reads GGAGVGKT.

The protein belongs to the ATPase alpha/beta chains family. As to quaternary structure, F-type ATPases have 2 components, CF(1) - the catalytic core - and CF(0) - the membrane proton channel. CF(1) has five subunits: alpha(3), beta(3), gamma(1), delta(1), epsilon(1). CF(0) has three main subunits: a(1), b(2) and c(9-12). The alpha and beta chains form an alternating ring which encloses part of the gamma chain. CF(1) is attached to CF(0) by a central stalk formed by the gamma and epsilon chains, while a peripheral stalk is formed by the delta and b chains.

Its subcellular location is the cell inner membrane. The catalysed reaction is ATP + H2O + 4 H(+)(in) = ADP + phosphate + 5 H(+)(out). Produces ATP from ADP in the presence of a proton gradient across the membrane. The catalytic sites are hosted primarily by the beta subunits. This is ATP synthase subunit beta from Xanthomonas oryzae pv. oryzae (strain KACC10331 / KXO85).